Reading from the N-terminus, the 198-residue chain is Uracil phosphoribosyltransferase homolog (198 aa).

It belongs to the UPRTase family.

It is found in the plastid. It localises to the chloroplast. In Porphyra purpurea (Red seaweed), this protein is Uracil phosphoribosyltransferase homolog.